Consider the following 469-residue polypeptide: Adenosylhomocysteinase (469 aa).

Residues T60, D135, and E195 each contribute to the substrate site. 196 to 198 (TTT) contacts NAD(+). Substrate is bound by residues K225 and D229. NAD(+) contacts are provided by residues N230, 259 to 264 (GYGDVG), E282, N317, 338 to 340 (IGH), and N383.

This sequence belongs to the adenosylhomocysteinase family. It depends on NAD(+) as a cofactor.

It is found in the cytoplasm. It catalyses the reaction S-adenosyl-L-homocysteine + H2O = L-homocysteine + adenosine. Its pathway is amino-acid biosynthesis; L-homocysteine biosynthesis; L-homocysteine from S-adenosyl-L-homocysteine: step 1/1. Functionally, may play a key role in the regulation of the intracellular concentration of adenosylhomocysteine. The protein is Adenosylhomocysteinase of Hyphomonas neptunium (strain ATCC 15444).